Consider the following 476-residue polypeptide: Bifunctional protein HldE (476 aa).

Positions 1–318 are ribokinase; the sequence is MAQYSAEFKQ…ENAIHARPET (318 aa). 195 to 198 is a binding site for ATP; it reads NMSE. The active site involves D264. The cytidylyltransferase stretch occupies residues 344–476; that stretch reads MTNGCFDILH…VIEKIKLLKD (133 aa).

It in the N-terminal section; belongs to the carbohydrate kinase PfkB family. In the C-terminal section; belongs to the cytidylyltransferase family. Homodimer.

It carries out the reaction D-glycero-beta-D-manno-heptose 7-phosphate + ATP = D-glycero-beta-D-manno-heptose 1,7-bisphosphate + ADP + H(+). The enzyme catalyses D-glycero-beta-D-manno-heptose 1-phosphate + ATP + H(+) = ADP-D-glycero-beta-D-manno-heptose + diphosphate. Its pathway is nucleotide-sugar biosynthesis; ADP-L-glycero-beta-D-manno-heptose biosynthesis; ADP-L-glycero-beta-D-manno-heptose from D-glycero-beta-D-manno-heptose 7-phosphate: step 1/4. It functions in the pathway nucleotide-sugar biosynthesis; ADP-L-glycero-beta-D-manno-heptose biosynthesis; ADP-L-glycero-beta-D-manno-heptose from D-glycero-beta-D-manno-heptose 7-phosphate: step 3/4. Functionally, catalyzes the phosphorylation of D-glycero-D-manno-heptose 7-phosphate at the C-1 position to selectively form D-glycero-beta-D-manno-heptose-1,7-bisphosphate. Catalyzes the ADP transfer from ATP to D-glycero-beta-D-manno-heptose 1-phosphate, yielding ADP-D-glycero-beta-D-manno-heptose. The protein is Bifunctional protein HldE of Haemophilus influenzae (strain PittGG).